The primary structure comprises 295 residues: Ethanolamine ammonia-lyase small subunit (295 aa).

The adenosylcob(III)alamin site is built by Val-207, Glu-228, and Cys-258.

It belongs to the EutC family. In terms of assembly, the basic unit is a heterodimer which dimerizes to form tetramers. The heterotetramers trimerize; 6 large subunits form a core ring with 6 small subunits projecting outwards. Requires adenosylcob(III)alamin as cofactor.

The protein resides in the bacterial microcompartment. The catalysed reaction is ethanolamine = acetaldehyde + NH4(+). The protein operates within amine and polyamine degradation; ethanolamine degradation. Functionally, catalyzes the deamination of various vicinal amino-alcohols to oxo compounds. Allows this organism to utilize ethanolamine as the sole source of nitrogen and carbon in the presence of external vitamin B12. This chain is Ethanolamine ammonia-lyase small subunit, found in Escherichia coli O81 (strain ED1a).